The following is a 276-amino-acid chain: Formamidopyrimidine-DNA glycosylase (276 aa).

Proline 2 serves as the catalytic Schiff-base intermediate with DNA. The active-site Proton donor is glutamate 3. Lysine 60 (proton donor; for beta-elimination activity) is an active-site residue. Residues histidine 93 and arginine 112 each coordinate DNA. An FPG-type zinc finger spans residues 240-274; sequence NVYGKKGEPCVTCGTILEKTVVGGRGTHYCPICQP. Catalysis depends on arginine 264, which acts as the Proton donor; for delta-elimination activity.

The protein belongs to the FPG family. As to quaternary structure, monomer. Zn(2+) serves as cofactor.

The enzyme catalyses Hydrolysis of DNA containing ring-opened 7-methylguanine residues, releasing 2,6-diamino-4-hydroxy-5-(N-methyl)formamidopyrimidine.. The catalysed reaction is 2'-deoxyribonucleotide-(2'-deoxyribose 5'-phosphate)-2'-deoxyribonucleotide-DNA = a 3'-end 2'-deoxyribonucleotide-(2,3-dehydro-2,3-deoxyribose 5'-phosphate)-DNA + a 5'-end 5'-phospho-2'-deoxyribonucleoside-DNA + H(+). Functionally, involved in base excision repair of DNA damaged by oxidation or by mutagenic agents. Acts as a DNA glycosylase that recognizes and removes damaged bases. Has a preference for oxidized purines, such as 7,8-dihydro-8-oxoguanine (8-oxoG). Has AP (apurinic/apyrimidinic) lyase activity and introduces nicks in the DNA strand. Cleaves the DNA backbone by beta-delta elimination to generate a single-strand break at the site of the removed base with both 3'- and 5'-phosphates. This is Formamidopyrimidine-DNA glycosylase from Bacillus cereus (strain ATCC 10987 / NRS 248).